Here is a 265-residue protein sequence, read N- to C-terminus: Tyrosine protein kinase-interacting protein (265 aa).

A compositionally biased stretch (acidic residues) spans 1–14 (MANEGEEIELTEFP). The interval 1-49 (MANEGEEIELTEFPETEKERKDEEKLSSCSEETTDTSSSSSSDHVPAPI) is disordered. The Cytoplasmic segment spans residues 1–238 (MANEGEEIEL…LKRLENKVNA (238 aa)). Residues 15–26 (ETEKERKDEEKL) are compositionally biased toward basic and acidic residues. Residues 27–43 (SSCSEETTDTSSSSSSD) show a composition bias toward low complexity. Residue tyrosine 123 is modified to Phosphotyrosine; by host LCK. Tyrosine 136 is subject to Phosphotyrosine; by host. A CSKH/LBD2 region spans residues 155-164 (EDLQSFLEKY). The disordered stretch occupies residues 172 to 192 (KRDLSATWDPGMPTPALPPRP). Residues 183–192 (MPTPALPPRP) form an SH3B/LBD1 region. Residues 183–192 (MPTPALPPRP) are compositionally biased toward pro residues. The interval 225 to 234 (IVKDLKRLEN) is SH3 binding. A helical transmembrane segment spans residues 239 to 259 (IICLVVVILAVLLLVTVLSIL). Topologically, residues 260 to 265 (HIGMKS) are extracellular.

As to quaternary structure, binds host LCK, human WDR48 and human NXF1/TAP. Forms a complex with activated LCK and STAT1 and STAT3. Post-translationally, phosphorylation on Tyr-123 acts as a docking site for the recruitment of STATs 1 and 3.

It is found in the host cell membrane. In terms of biological role, plays a critical role in virus induced T-cell transformation. Binds to T-cell-specific tyrosine kinase LCK SH2 and SH3 domains, thereby activating its kinase activity. Once phosphorylated by host LCK, forms a complex with at least STAT 1 and 3, resulting on the phosphorylation of STAT3 and presumably STAT1, and their migration into the nucleus to induce transcription of target genes. Stimulates host ILF3/NF-AT-90 activity. Association with host NXF1/TAP transduces the signal up-regulating surface expression of adhesion molecules as well as activating NF-kappa-B activity. Acts synergistically with StpC to stimulate NF-kappa-B activity and interleukin-2 gene expression. Activation of NF-kappa-B protects lymphocytes from apoptosis, thereby facilitating viral induced cell transformation. May cause down-regulation of host LCK and cell apoptosis when stably overexpressed ex vivo. Interaction with WDR48 induce degradation of T-cell receptor in a lysosome-dependent fashion, when both proteins are overexpressed. The biological effect of this interaction remains controversial since no T-cell receptor degradation is observed in infected cells. The protein is Tyrosine protein kinase-interacting protein of Saimiriine herpesvirus 2 (strain 484) (SaHV-2).